The sequence spans 325 residues: GMP reductase (325 aa).

The active-site Thioimidate intermediate is Cys173. NADP(+) is bound at residue 202–225 (IIADGGIRSHGDIAKSVRFGATMV).

It belongs to the IMPDH/GMPR family. GuaC type 2 subfamily.

It catalyses the reaction IMP + NH4(+) + NADP(+) = GMP + NADPH + 2 H(+). Its function is as follows. Catalyzes the irreversible NADPH-dependent deamination of GMP to IMP. It functions in the conversion of nucleobase, nucleoside and nucleotide derivatives of G to A nucleotides, and in maintaining the intracellular balance of A and G nucleotides. This Delftia acidovorans (strain DSM 14801 / SPH-1) protein is GMP reductase.